A 528-amino-acid polypeptide reads, in one-letter code: Ceramide glucosyltransferase (528 aa).

The Lumenal segment spans residues 1–6 (MYSFIE). The helical transmembrane segment at 7–27 (CIAGALFVLGCVVVTLVVIGV) threads the bilayer. The Cytoplasmic segment spans residues 28-369 (RALLYNFRNR…TVLSATILEP (342 aa)). A short sequence motif (D1) is located at residue Asp94. Residue Asp154 is a short sequence motif, D2. Residue Asp308 is a short sequence motif, D3. The active-site Proton acceptor is Asp308. The (Q/R)XXRW motif lies at 349-353 (RRSRW). A helical membrane pass occupies residues 370-390 (FTECFLFATYMSLAMTTIPVL). Over 391–402 (SQNLGIPKTWNA) the chain is Lumenal. A helical transmembrane segment spans residues 403-423 (TAIAWFTITTLWMLIDYIGYL). At 424–457 (RLHSGVTMEVDEHTPYFAKGFKNTGGIKRRPFLE) the chain is on the cytoplasmic side. Residues 458–478 (FLAAWIGREGLAFPVWAYAVV) traverse the membrane as a helical segment. Residues 479-528 (FGNTVNWRGRLFYIHWDTTVDAVEPREERTREVRTPELERGPSRNKHRVD) are Lumenal-facing. A disordered region spans residues 503-528 (PREERTREVRTPELERGPSRNKHRVD).

This sequence belongs to the glycosyltransferase 2 family.

It localises to the golgi apparatus membrane. The catalysed reaction is an N-acylsphing-4-enine + UDP-alpha-D-glucose = a beta-D-glucosyl-(1&lt;-&gt;1')-N-acylsphing-4-enine + UDP + H(+). Its pathway is lipid metabolism; sphingolipid metabolism. Catalyzes the final step in the biosynthesis of the membrane lipid glucosylceramide (GluCer), the transfer of glucose to ceramide. Glucosylceramides play important roles in growth, differentiation and pathogenicity. Contribution to fungal pathogenesis is host-dependent. This is Ceramide glucosyltransferase from Gibberella zeae (strain ATCC MYA-4620 / CBS 123657 / FGSC 9075 / NRRL 31084 / PH-1) (Wheat head blight fungus).